The chain runs to 315 residues: Methionyl-tRNA formyltransferase (315 aa).

113–116 (SLLP) is a binding site for (6S)-5,6,7,8-tetrahydrofolate.

It belongs to the Fmt family.

The catalysed reaction is L-methionyl-tRNA(fMet) + (6R)-10-formyltetrahydrofolate = N-formyl-L-methionyl-tRNA(fMet) + (6S)-5,6,7,8-tetrahydrofolate + H(+). Functionally, attaches a formyl group to the free amino group of methionyl-tRNA(fMet). The formyl group appears to play a dual role in the initiator identity of N-formylmethionyl-tRNA by promoting its recognition by IF2 and preventing the misappropriation of this tRNA by the elongation apparatus. The protein is Methionyl-tRNA formyltransferase of Pectobacterium atrosepticum (strain SCRI 1043 / ATCC BAA-672) (Erwinia carotovora subsp. atroseptica).